Consider the following 181-residue polypeptide: Probable pyruvoyl-dependent arginine decarboxylase (181 aa).

Serine 43 is modified (pyruvic acid (Ser)).

It belongs to the PdaD family. Pyruvate serves as cofactor.

The enzyme catalyses L-arginine + H(+) = agmatine + CO2. This chain is Probable pyruvoyl-dependent arginine decarboxylase, found in Prosthecochloris aestuarii (strain DSM 271 / SK 413).